The chain runs to 173 residues: U1 small nuclear ribonucleoprotein C (173 aa).

The segment at 4–36 adopts a Matrin-type zinc-finger fold; the sequence is YYCDYCDTYLTHDSPSVRKTHCQGRKHKDNVKF. The interval 72-100 is disordered; that stretch reads AAIPPPANMQGPPRPVPPGPMGPGPNMLG. The segment covering 73–94 has biased composition (pro residues); the sequence is AIPPPANMQGPPRPVPPGPMGP.

Belongs to the U1 small nuclear ribonucleoprotein C family. As to quaternary structure, U1 snRNP is composed of the 7 core Sm proteins B/B', D1, D2, D3, E, F and G that assemble in a heptameric protein ring on the Sm site of the small nuclear RNA to form the core snRNP, and at least 3 U1 snRNP-specific proteins U1-70K, U1-A and U1-C. U1-C interacts with U1 snRNA and the 5' splice-site region of the pre-mRNA.

It is found in the nucleus. Component of the spliceosomal U1 snRNP, which is essential for recognition of the pre-mRNA 5' splice-site and the subsequent assembly of the spliceosome. U1-C is directly involved in initial 5' splice-site recognition for both constitutive and regulated alternative splicing. The interaction with the 5' splice-site seems to precede base-pairing between the pre-mRNA and the U1 snRNA. Stimulates commitment or early (E) complex formation by stabilizing the base pairing of the 5' end of the U1 snRNA and the 5' splice-site region. The chain is U1 small nuclear ribonucleoprotein C from Pediculus humanus subsp. corporis (Body louse).